The sequence spans 855 residues: MKELTDKSILNHTPMMQQYWQIKAQHSDVLLFYRMGDFYELFYEDAKLASQLIDISLTKRGFSAGEPIPMAGIPYHALDSYLAKLVALGKSVAICEQVGEPTINKGPVERRVVRIVTPGTLSDEVLLNERQDNLLAAMLQDKQGFGYATLDITSGRFIVSEPKDFEAMAAELQRTNPAELLYPDTQHNLALIEHRRGLRRRPIWEFELDTACQQLMIQFGTSSLKGFGIECAHLALRAAGCLLQYAKDTQRTAMPHISTITLERQEDYVVMDAATMRNLELTHNLSGGIEHTLVAVLDHTVTSMGSRMLKRWLQMPTKHLTTIENRQQSIYFLQGKFDILQPILRKIGDLERILARLALRSARPRDLARIRNALQQLPDIQSLLADNTSGMHLSQLLSNVGYFDNLCQLLERAIVISPSALLRDGGIIATGYNLELDELRALANNATDYLDILEMKERKHTGLETLKIGFNAVHGYFIQLSREQSHRAPKRYIRRQTLKHVERYIIPELKEYEDKVITSKSKALSLEKKLYDALLDMLLPYLTQLQLSATALAELDVLSNLAERADTLHYVCPMINNQPIINIIDGRHPVVEPLMSKPFIANTLSLSDQNHMIIITGPNMGGKSTYMRQNALIVLLAYIGSFVPASQAIIGPIDRIFTRIGAADDLVSGRSTFMVEMTETANILHNATCQSLVLMDEIGRGTSTYDGLSLAWACAESLASRIKAMTLFATHYFELTTLPNKIKGIVNAHFAAIEYNDTIAFMHSIQNGAANKSYGLSVASLAGIPRDVIKCASRKLHELENLSNNIALTTPLSSRSLPQFTQETSPVIQALQEIDPDSLSPRQALDLLYSLKQMI.

An ATP-binding site is contributed by 617-624 (GPNMGGKS).

It belongs to the DNA mismatch repair MutS family.

In terms of biological role, this protein is involved in the repair of mismatches in DNA. It is possible that it carries out the mismatch recognition step. This protein has a weak ATPase activity. This chain is DNA mismatch repair protein MutS, found in Baumannia cicadellinicola subsp. Homalodisca coagulata.